A 373-amino-acid polypeptide reads, in one-letter code: 5-amino-6-(5-phospho-D-ribitylamino)uracil phosphatase, chloroplastic (373 aa).

The protein belongs to the HAD-like hydrolase superfamily. DOG/GPP family. As to quaternary structure, homodimer. It depends on Mg(2+) as a cofactor.

It localises to the plastid. The protein localises to the chloroplast. The enzyme catalyses 5-amino-6-(5-phospho-D-ribitylamino)uracil + H2O = 5-amino-6-(D-ribitylamino)uracil + phosphate. Functionally, catalyzes the dephosphorylation of 5-amino-6-(5-phospho-D-ribitylamino)uracil, also known as ARPP, but has no activity toward flavin mononucleotide (FMN). The protein is 5-amino-6-(5-phospho-D-ribitylamino)uracil phosphatase, chloroplastic of Arabidopsis thaliana (Mouse-ear cress).